We begin with the raw amino-acid sequence, 676 residues long: Methionine--tRNA ligase (676 aa).

The short motif at Pro15 to His25 is the 'HIGH' region element. Residues Cys146, Cys149, Cys159, and Cys162 each contribute to the Zn(2+) site. Residues Lys332–Ser336 carry the 'KMSKS' region motif. Position 335 (Lys335) interacts with ATP. The 102-residue stretch at Asp575–Lys676 folds into the tRNA-binding domain.

It belongs to the class-I aminoacyl-tRNA synthetase family. MetG type 1 subfamily. Homodimer. Zn(2+) is required as a cofactor.

It localises to the cytoplasm. It carries out the reaction tRNA(Met) + L-methionine + ATP = L-methionyl-tRNA(Met) + AMP + diphosphate. Functionally, is required not only for elongation of protein synthesis but also for the initiation of all mRNA translation through initiator tRNA(fMet) aminoacylation. The sequence is that of Methionine--tRNA ligase from Shewanella sp. (strain ANA-3).